Here is a 349-residue protein sequence, read N- to C-terminus: Putative methylesterase 12, chloroplastic (349 aa).

Residues 1–77 (MGNRVICMKK…GSTSSRRGTL (77 aa)) constitute a chloroplast transit peptide. Residues 61–80 (GSMSRRIGSTSSRRGTLSDS) are disordered. The active-site Acyl-ester intermediate is the S173. Catalysis depends on charge relay system residues D300 and H328.

Belongs to the AB hydrolase superfamily. Methylesterase family.

It is found in the plastid. Its subcellular location is the chloroplast. Functionally, putative methylesterase. The chain is Putative methylesterase 12, chloroplastic from Arabidopsis thaliana (Mouse-ear cress).